Consider the following 116-residue polypeptide: Large ribosomal subunit protein bL19 (116 aa).

It belongs to the bacterial ribosomal protein bL19 family.

In terms of biological role, this protein is located at the 30S-50S ribosomal subunit interface and may play a role in the structure and function of the aminoacyl-tRNA binding site. The sequence is that of Large ribosomal subunit protein bL19 from Geobacillus sp. (strain WCH70).